Here is a 370-residue protein sequence, read N- to C-terminus: UDP-3-O-acylglucosamine N-acyltransferase (370 aa).

The Proton acceptor role is filled by H252. The tract at residues 350-370 (AAGRQDGPAANAASSSAGDKA) is disordered. Residues 358–370 (AANAASSSAGDKA) are compositionally biased toward low complexity.

The protein belongs to the transferase hexapeptide repeat family. LpxD subfamily. Homotrimer.

The enzyme catalyses a UDP-3-O-[(3R)-3-hydroxyacyl]-alpha-D-glucosamine + a (3R)-hydroxyacyl-[ACP] = a UDP-2-N,3-O-bis[(3R)-3-hydroxyacyl]-alpha-D-glucosamine + holo-[ACP] + H(+). Its pathway is bacterial outer membrane biogenesis; LPS lipid A biosynthesis. In terms of biological role, catalyzes the N-acylation of UDP-3-O-acylglucosamine using 3-hydroxyacyl-ACP as the acyl donor. Is involved in the biosynthesis of lipid A, a phosphorylated glycolipid that anchors the lipopolysaccharide to the outer membrane of the cell. The chain is UDP-3-O-acylglucosamine N-acyltransferase from Paraburkholderia xenovorans (strain LB400).